Consider the following 490-residue polypeptide: MAADPSSNSSSVPAANGADYADTASAAYQAALQVIESVEPRVAAATRKELADQRDSLKLIASENYASPAVLLTMGTWFSDKYAEGTIGHRFYAGCQNVDTVESVAAEHARELFGAPYAYVQPHSGIDANLVAFWAILATRVEAPELANFGAKHINDLSEADWETLRNKLGNQRLLGMSLDAGGHLTHGFRPNISGKMFHQRSYGTNPETGFLDYDAVAAAAREFKPLVLVAGYSAYPRRVNFAKMREIADEVGATLMVDMAHFAGLVAGKVFTGDEDPVPHAHVTTTTTHKSLRGPRGGMVLATEEYAPAVDKGCPMVLGGPLSHVMAAKAVALAEARQPAFQQYAQQVADNAQALADGFVKRDAGLVTGGTDNHIVLLDVTSFGLTGRQAESALLDAGIVTNRNSIPADPNGAWYTSGVRLGTPALTSRGFGADDFDRVAELIVEVLANTQPEGTSKAKYKLADGTAERVHAASSELLSANPLYPGLTL.

Residues L179 and 183-185 (GHL) each bind (6S)-5,6,7,8-tetrahydrofolate. The residue at position 291 (K291) is an N6-(pyridoxal phosphate)lysine. K362 participates in a covalent cross-link: Isoglutamyl lysine isopeptide (Lys-Gln) (interchain with Q-Cter in protein Pup).

This sequence belongs to the SHMT family. In terms of assembly, homodimer. It depends on pyridoxal 5'-phosphate as a cofactor.

It is found in the cytoplasm. The enzyme catalyses (6R)-5,10-methylene-5,6,7,8-tetrahydrofolate + glycine + H2O = (6S)-5,6,7,8-tetrahydrofolate + L-serine. Its pathway is one-carbon metabolism; tetrahydrofolate interconversion. It functions in the pathway amino-acid biosynthesis; glycine biosynthesis; glycine from L-serine: step 1/1. Catalyzes the reversible interconversion of serine and glycine with tetrahydrofolate (THF) serving as the one-carbon carrier. This reaction serves as the major source of one-carbon groups required for the biosynthesis of purines, thymidylate, methionine, and other important biomolecules. Also exhibits THF-independent aldolase activity toward beta-hydroxyamino acids, producing glycine and aldehydes, via a retro-aldol mechanism. This chain is Serine hydroxymethyltransferase, found in Mycolicibacterium smegmatis (strain ATCC 700084 / mc(2)155) (Mycobacterium smegmatis).